The following is a 306-amino-acid chain: Oligopeptide transport system permease protein OppB (306 aa).

The Cytoplasmic segment spans residues 1 to 12; that stretch reads MLKFILRRCLEA. Residues 13-30 form a helical membrane-spanning segment; that stretch reads IPTLFILITISFFMMRLA. At 31 to 101 the chain is on the periplasmic side; sequence PGSPFTGERA…ASFPVSAKLG (71 aa). The ABC transmembrane type-1 domain maps to 94–293; the sequence is FPVSAKLGAA…ALTILFNAIV (200 aa). Residues 102 to 121 traverse the membrane as a helical segment; the sequence is AAAFLLAVIIGVSAGVIAAL. The Cytoplasmic portion of the chain corresponds to 122-133; that stretch reads KQNTRWDYTVMG. Residues 134–156 traverse the membrane as a helical segment; that stretch reads FAMTGVVIPSFVVAPLLVMVFAI. The Periplasmic segment spans residues 157-165; the sequence is TLQWLPGGG. Residues 166–188 form a helical membrane-spanning segment; that stretch reads WNGGALKFMILPMVALSLAYIAS. At 189–227 the chain is on the cytoplasmic side; it reads IARITRGSMIEVLHSNFIRTARAKGLPMRRIIFRHALKP. A helical membrane pass occupies residues 228–250; sequence ALLPVLSYMGPAFVGIITGSMVI. Topologically, residues 251 to 277 are periplasmic; the sequence is ETIYGLPGIGQLFVNGALNRDYSLVLS. Residues 278 to 300 traverse the membrane as a helical segment; it reads LTILVGALTILFNAIVDVLYAVI. Residues 301-306 lie on the Cytoplasmic side of the membrane; it reads DPKIRY.

The protein belongs to the binding-protein-dependent transport system permease family. OppBC subfamily. In terms of assembly, the complex is composed of two ATP-binding proteins (OppD and OppF), two transmembrane proteins (OppB and OppC) and a solute-binding protein (OppA).

The protein resides in the cell inner membrane. Part of the ABC transporter complex OppABCDF involved in the uptake of oligopeptides, including the cell wall murein tripeptide L-alanyl-gamma-D-glutamyl-meso-diaminopimelate. Responsible for the translocation of the substrate across the membrane. Plays an important nutritional role and is involved in the recycling of cell wall peptides. This Salmonella typhimurium (strain LT2 / SGSC1412 / ATCC 700720) protein is Oligopeptide transport system permease protein OppB.